The chain runs to 483 residues: Acetyltransferase AOL_s00215g273 (483 aa).

Transmembrane regions (helical) follow at residues 9–29 (ALIGVTVIPTLILSLPTTSFV), 33–53 (IYPLPALLVLRALLWPPTEGL), 141–161 (VAYIFESMVSILSIYLGLYTC), 191–211 (IFQMVVAFMGIFAMVSNSVLV), 292–312 (FLVFSAFGVSGLLHSLAVYYG), 334–354 (VTGYFFYIQPFAITLEDFICW), 372–392 (WFVGMVYTLTWFTWGTAVLWI), and 453–473 (LGGYLYLYAYTTLEILGGSGF).

Belongs to the wax synthase family.

The protein localises to the membrane. It functions in the pathway secondary metabolite biosynthesis; terpenoid biosynthesis. Its function is as follows. Acetyltransferase; part of the gene cluster that mediates the biosynthesis of sesquiterpenyl epoxy-cyclohexenoids (SECs) such as anthrobotrisins and arthrosporols, metabolites that possess a novel hybrid carbon skeleton consisting of a polyketide-derived epoxycyclohexenol combined with a terpenoid-derived monocyclic sesquiterpenol substructure (PKS-PTS hybrid). The SEC pathway plays an important role for fungal soil colonization via decreasing fungal nematode-capturing ability. The role of the acetyltransferase in SEC biosynthesis has still to be determined. The pathway begins with the biosynthesis of 6-methylsalicylic acid (6-MSA), the first precursor of the polyketide-derived epoxycyclohexenol in arthrosporols, by the polyketide synthase (PKS) AOL_s00215g283 via condensation of 1 acetate and 3 malonate units. The 6-methylsalicylic acid decarboxylase AOL_s00215g281 then catalyzes the decarboxylation of 6-methylsalicylic acid to yield m-cresol. The cytochrome P450 monooxygenase AOL_s00215g282 further oxidizes m-cresol to yield toluquinol. With the assistance of the oxidoreductase AOL_s00215g277, the polyprenyl transferase AOL_s00215g276 catalyzes the farnesylation of toluquinol to produce farnesyl hydroquinone, the hybrid precursor for biosynthesis of SECs. Farnesyl hydroquinone undergoes epoxidation and then subsequent dehydrogenation to form farnesyl epoxy-quinone, the first and simplest SEC. The cytochrome P450 monooxygenase AOL_s00215g278 and the FAD-dependent monooxygenase AOL_s00215g279 might be involved in the oxygenation of the phenol moiety, most likely in the epoxy formation. The cytochrome P450 monooxygenases AOL_s00215g274 and AOL_s00215g280 are involved in specific regional ketone reductions at respectively C-4 and C-1 of farnesyl epoxy-quinone PubMed:33823587. This is Acetyltransferase AOL_s00215g273 from Arthrobotrys oligospora (strain ATCC 24927 / CBS 115.81 / DSM 1491) (Nematode-trapping fungus).